The following is a 45-amino-acid chain: Mu-conotoxin-like Cal 12.1.2e (45 aa).

4 disulfide bridges follow: cysteine 3–cysteine 16, cysteine 11–cysteine 28, cysteine 18–cysteine 33, and cysteine 27–cysteine 39. At tryptophan 17 the chain carries 6'-bromotryptophan. Proline 23 is modified (4-hydroxyproline). Tryptophan 38 carries the post-translational modification 6'-bromotryptophan. Position 40 is a 4-hydroxyproline (proline 40).

In terms of tissue distribution, expressed by the venom duct.

It localises to the secreted. In terms of biological role, mu-conotoxins block voltage-gated sodium channels. This toxin reversibly blocks voltage-gated sodium channel in cephalopods, with no alteration in the voltage dependence of sodium conductance or on the kinetics of inactivation. In Californiconus californicus (California cone), this protein is Mu-conotoxin-like Cal 12.1.2e.